The following is a 351-amino-acid chain: uncharacterized protein (351 aa).

Mn(2+)-binding residues include Asp215, Asp226, His290, Glu319, and Glu333.

It belongs to the peptidase M24B family. It depends on Mn(2+) as a cofactor.

This is an uncharacterized protein from Staphylococcus haemolyticus (strain JCSC1435).